The primary structure comprises 601 residues: Serine/threonine-protein phosphatase 2A 65 kDa regulatory subunit A beta isoform (601 aa).

Ala2 bears the N-acetylalanine mark. HEAT repeat units follow at residues Asp20 to Arg58, Thr59 to Asp96, Phe97 to Ala135, Leu136 to Ala173, Val174 to Ser212, Val213 to Asp251, Leu252 to Ile290, Ala291 to Val333, Ile334 to Asn372, Thr373 to Gln411, Leu412 to Phe450, Phe451 to Trp489, Ala490 to Ile528, Thr529 to Ala567, and Leu568 to Ala601.

The protein belongs to the phosphatase 2A regulatory subunit A family. PP2A consists of a common heterodimeric core enzyme, composed of a 36 kDa catalytic subunit (subunit C) and a 65 kDa constant regulatory subunit (PR65 or subunit A), that associates with a variety of regulatory subunits. Proteins that associate with the core dimer include three families of regulatory subunits B (the R2/B/PR55/B55, R3/B''/PR72/PR130/PR59 and R5/B'/B56 families), the 48 kDa variable regulatory subunit, viral proteins, and cell signaling molecules. Interacts with IPO9. Interacts with SGO1. Interacts with RAF1.

In terms of biological role, the PR65 subunit of protein phosphatase 2A serves as a scaffolding molecule to coordinate the assembly of the catalytic subunit and a variable regulatory B subunit. This is Serine/threonine-protein phosphatase 2A 65 kDa regulatory subunit A beta isoform (Ppp2r1b) from Rattus norvegicus (Rat).